Consider the following 272-residue polypeptide: HMP-PP phosphatase (272 aa).

Residue aspartate 8 is the Nucleophile of the active site. Mg(2+) is bound by residues aspartate 8, aspartate 10, and aspartate 212.

Belongs to the HAD-like hydrolase superfamily. Cof family. Mg(2+) is required as a cofactor.

It carries out the reaction 4-amino-2-methyl-5-(diphosphooxymethyl)pyrimidine + H2O = 4-amino-2-methyl-5-(phosphooxymethyl)pyrimidine + phosphate + H(+). Its function is as follows. Catalyzes the hydrolysis of 4-amino-2-methyl-5-hydroxymethylpyrimidine pyrophosphate (HMP-PP) to 4-amino-2-methyl-5-hydroxymethylpyrimidine phosphate (HMP-P). This is HMP-PP phosphatase from Escherichia coli (strain 55989 / EAEC).